The primary structure comprises 270 residues: Acetylglutamate kinase (270 aa).

Residues 41 to 42 (GG), R63, and N166 contribute to the substrate site.

This sequence belongs to the acetylglutamate kinase family. ArgB subfamily.

The protein localises to the cytoplasm. It carries out the reaction N-acetyl-L-glutamate + ATP = N-acetyl-L-glutamyl 5-phosphate + ADP. It functions in the pathway amino-acid biosynthesis; L-arginine biosynthesis; N(2)-acetyl-L-ornithine from L-glutamate: step 2/4. Functionally, catalyzes the ATP-dependent phosphorylation of N-acetyl-L-glutamate. This is Acetylglutamate kinase from Anaeromyxobacter dehalogenans (strain 2CP-C).